The primary structure comprises 648 residues: Biosynthetic arginine decarboxylase (648 aa).

The residue at position 109 (Lys109) is an N6-(pyridoxal phosphate)lysine. 291 to 301 (IDVGGGLGIDF) lines the substrate pocket.

It belongs to the Orn/Lys/Arg decarboxylase class-II family. SpeA subfamily. Requires Mg(2+) as cofactor. The cofactor is pyridoxal 5'-phosphate.

The enzyme catalyses L-arginine + H(+) = agmatine + CO2. The protein operates within amine and polyamine biosynthesis; agmatine biosynthesis; agmatine from L-arginine: step 1/1. Its function is as follows. Catalyzes the biosynthesis of agmatine from arginine. In Prochlorococcus marinus (strain AS9601), this protein is Biosynthetic arginine decarboxylase.